The following is a 250-amino-acid chain: Tumor necrosis factor ligand superfamily member 13 (250 aa).

A propeptide spanning residues methionine 1–arginine 104 is cleaved from the precursor. Disordered stretches follow at residues glutamate 61–serine 82 and aspartate 89–threonine 108. The THD domain occupies serine 116–leucine 250. Asparagine 124 carries an N-linked (GlcNAc...) asparagine glycan. An intrachain disulfide couples cysteine 196 to cysteine 211.

This sequence belongs to the tumor necrosis factor family. As to quaternary structure, homotrimer. Post-translationally, the precursor is cleaved by furin. In terms of tissue distribution, expressed at high levels in transformed cell lines, cancers of colon, thyroid, lymphoid tissues and specifically expressed in monocytes and macrophages.

The protein localises to the secreted. In terms of biological role, cytokine that binds to TNFRSF13B/TACI and to TNFRSF17/BCMA. Plays a role in the regulation of tumor cell growth. May be involved in monocyte/macrophage-mediated immunological processes. This is Tumor necrosis factor ligand superfamily member 13 (TNFSF13) from Homo sapiens (Human).